A 274-amino-acid polypeptide reads, in one-letter code: Large ribosomal subunit protein uL2 (274 aa).

Disordered stretches follow at residues 28 to 54 (APHA…TRHI) and 224 to 274 (VAMN…RRRK). A compositionally biased stretch (basic and acidic residues) spans 263 to 274 (KRTDKMIVRRRK).

Belongs to the universal ribosomal protein uL2 family. Part of the 50S ribosomal subunit. Forms a bridge to the 30S subunit in the 70S ribosome.

Functionally, one of the primary rRNA binding proteins. Required for association of the 30S and 50S subunits to form the 70S ribosome, for tRNA binding and peptide bond formation. It has been suggested to have peptidyltransferase activity; this is somewhat controversial. Makes several contacts with the 16S rRNA in the 70S ribosome. The chain is Large ribosomal subunit protein uL2 from Pseudomonas syringae pv. tomato (strain ATCC BAA-871 / DC3000).